A 180-amino-acid polypeptide reads, in one-letter code: Putative 3-methyladenine DNA glycosylase (180 aa).

Belongs to the DNA glycosylase MPG family.

This is Putative 3-methyladenine DNA glycosylase from Wolbachia pipientis wMel.